Here is a 160-residue protein sequence, read N- to C-terminus: MENQKQYPMTQEGFEKLEQELEELKTVKRPEVVEKIKVARSFGDLSENSEYDAAKDEQGFIEQDIQRIEHMIRNALIIEDSGDNNVVQIGKTVTFIEIPDGEEEVYQIVGSAEADAFNGKISNESPIAKSLIGKHLDDEVRVPLPNGAEIKVKITNIQSQ.

Residues Gln-4 to His-70 are a coiled coil.

The protein belongs to the GreA/GreB family.

Necessary for efficient RNA polymerase transcription elongation past template-encoded arresting sites. The arresting sites in DNA have the property of trapping a certain fraction of elongating RNA polymerases that pass through, resulting in locked ternary complexes. Cleavage of the nascent transcript by cleavage factors such as GreA or GreB allows the resumption of elongation from the new 3'terminus. GreA releases sequences of 2 to 3 nucleotides. The sequence is that of Transcription elongation factor GreA from Staphylococcus carnosus (strain TM300).